Here is a 702-residue protein sequence, read N- to C-terminus: Elongation factor G (702 aa).

The 189-residue stretch at 8–196 folds into the tr-type G domain; the sequence is ERYRNIGISA…MKAIIWDEAS (189 aa). GTP contacts are provided by residues 17–24, 88–92, and 142–145; these read AHIDAGKT, DTPGH, and NKMD.

Belongs to the TRAFAC class translation factor GTPase superfamily. Classic translation factor GTPase family. EF-G/EF-2 subfamily.

The protein localises to the cytoplasm. In terms of biological role, catalyzes the GTP-dependent ribosomal translocation step during translation elongation. During this step, the ribosome changes from the pre-translocational (PRE) to the post-translocational (POST) state as the newly formed A-site-bound peptidyl-tRNA and P-site-bound deacylated tRNA move to the P and E sites, respectively. Catalyzes the coordinated movement of the two tRNA molecules, the mRNA and conformational changes in the ribosome. The sequence is that of Elongation factor G (fusA) from Thiomonas delicata (Thiomonas cuprina).